Consider the following 301-residue polypeptide: Cuticle collagen 1 (301 aa).

Positions 1–37 are cleaved as a signal peptide; the sequence is METDGRLKAYKFVAYAAVGFSIAAVASVLLTLPMVYS. A furin-like endopeptidase recognition region region spans residues 79-82; it reads RTTR. 4 triple-helical region regions span residues 105–134, 153–179, 183–209, and 218–283; these read GPPG…PGKP, GPPG…PGTD, GSPG…PGTP, and GAPG…KGIC. A disordered region spans residues 109–284; it reads PAGAPGKPGK…GTPGEKGICP (176 aa). Composition is skewed to pro residues over residues 131 to 164 and 184 to 193; these read PGKP…PGAP and SPGPRGPPGP. The span at 194-210 shows a compositional bias: low complexity; it reads AGEAGAPGPAGEPGTPA. The span at 226–258 shows a compositional bias: pro residues; the sequence is SGPPGPPGPPGAPGNDGPPGPPGPKGAPGPDGP.

The protein belongs to the cuticular collagen family. Collagen polypeptide chains are complexed within the cuticle by disulfide bonds and other types of covalent cross-links.

It localises to the secreted. Its subcellular location is the extracellular space. Its function is as follows. Secreted collagen that forms part of the nematode cuticle, which functions as an exoskeleton and a barrier to protect the worm from its environment. Secretion and subsequent incorporation into the cuticle is likely mediated by bli-4, which probably cleaves at the N-terminal consensus furin cleavage site. This chain is Cuticle collagen 1 (sqt-3), found in Caenorhabditis elegans.